The sequence spans 893 residues: cGMP-specific 3',5'-cyclic phosphodiesterase (893 aa).

2 GAF domains span residues 21–173 and 205–390; these read DIDV…GIGI and NLEC…GLGI. One can recognise a PDEase domain in the interval 420–743; it reads GQDQTEKLIQ…RNWQDLAEKV (324 aa). His-496 serves as the catalytic Proton donor. Residues His-500, His-536, Asp-537, and Asp-647 each contribute to the a divalent metal cation site. Disordered regions lie at residues 784–807 and 844–893; these read QQSQHGGDDSHTPEHQRSGSRLSI and HVSE…CALL. Composition is skewed to basic and acidic residues over residues 789-800 and 844-853; these read GGDDSHTPEHQR and HVSEDMDDKS. Positions 864 to 880 are enriched in low complexity; that stretch reads SVGRMSASSSTSSAGTV. Residues 883-893 show a composition bias toward basic residues; it reads SKKRSKLCALL. Cys-890 bears the Cysteine methyl ester mark. Cys-890 carries the S-farnesyl cysteine lipid modification. Positions 891–893 are cleaved as a propeptide — removed in mature form; that stretch reads ALL.

The protein belongs to the cyclic nucleotide phosphodiesterase family. Interacts with PrBP. The cofactor is a divalent metal cation.

It localises to the cell membrane. It carries out the reaction 3',5'-cyclic GMP + H2O = GMP + H(+). Functionally, has a role regulating cGMP transport in Malpighian tubule principal cells. The chain is cGMP-specific 3',5'-cyclic phosphodiesterase from Drosophila virilis (Fruit fly).